Reading from the N-terminus, the 346-residue chain is Holliday junction branch migration complex subunit RuvB (346 aa).

The large ATPase domain (RuvB-L) stretch occupies residues methionine 1 to tyrosine 182. Residues leucine 21, arginine 22, glycine 63, lysine 66, threonine 67, threonine 68, glutamate 129 to phenylalanine 131, arginine 172, tyrosine 182, and arginine 219 each bind ATP. Position 67 (threonine 67) interacts with Mg(2+). Positions threonine 183–leucine 253 are small ATPAse domain (RuvB-S). Positions asparagine 256 to asparagine 346 are head domain (RuvB-H). Positions 292, 311, and 316 each coordinate DNA.

This sequence belongs to the RuvB family. In terms of assembly, homohexamer. Forms an RuvA(8)-RuvB(12)-Holliday junction (HJ) complex. HJ DNA is sandwiched between 2 RuvA tetramers; dsDNA enters through RuvA and exits via RuvB. An RuvB hexamer assembles on each DNA strand where it exits the tetramer. Each RuvB hexamer is contacted by two RuvA subunits (via domain III) on 2 adjacent RuvB subunits; this complex drives branch migration. In the full resolvosome a probable DNA-RuvA(4)-RuvB(12)-RuvC(2) complex forms which resolves the HJ.

Its subcellular location is the cytoplasm. The enzyme catalyses ATP + H2O = ADP + phosphate + H(+). Functionally, the RuvA-RuvB-RuvC complex processes Holliday junction (HJ) DNA during genetic recombination and DNA repair, while the RuvA-RuvB complex plays an important role in the rescue of blocked DNA replication forks via replication fork reversal (RFR). RuvA specifically binds to HJ cruciform DNA, conferring on it an open structure. The RuvB hexamer acts as an ATP-dependent pump, pulling dsDNA into and through the RuvAB complex. RuvB forms 2 homohexamers on either side of HJ DNA bound by 1 or 2 RuvA tetramers; 4 subunits per hexamer contact DNA at a time. Coordinated motions by a converter formed by DNA-disengaged RuvB subunits stimulates ATP hydrolysis and nucleotide exchange. Immobilization of the converter enables RuvB to convert the ATP-contained energy into a lever motion, pulling 2 nucleotides of DNA out of the RuvA tetramer per ATP hydrolyzed, thus driving DNA branch migration. The RuvB motors rotate together with the DNA substrate, which together with the progressing nucleotide cycle form the mechanistic basis for DNA recombination by continuous HJ branch migration. Branch migration allows RuvC to scan DNA until it finds its consensus sequence, where it cleaves and resolves cruciform DNA. The chain is Holliday junction branch migration complex subunit RuvB from Rhizobium johnstonii (strain DSM 114642 / LMG 32736 / 3841) (Rhizobium leguminosarum bv. viciae).